Consider the following 419-residue polypeptide: Serine/threonine-protein kinase Kist (419 aa).

One can recognise a Protein kinase domain in the interval 23 to 304; that stretch reads WQVQSRLGSG…AEMALCSPFF (282 aa). Residues 29-37 and lysine 54 each bind ATP; that span reads LGSGSSASV. Catalysis depends on proton acceptor residues aspartate 141 and aspartate 158. Residues 324–406 form the RRM domain; it reads RLLNVLDDDY…KFVVATFYPL (83 aa).

Belongs to the protein kinase superfamily. Ser/Thr protein kinase family. In terms of assembly, interacts with stathmin, PAM and CDKN1B/p27Kip1.

It localises to the nucleus. It catalyses the reaction L-seryl-[protein] + ATP = O-phospho-L-seryl-[protein] + ADP + H(+). The enzyme catalyses L-threonyl-[protein] + ATP = O-phospho-L-threonyl-[protein] + ADP + H(+). Upon serum stimulation, phosphorylates CDKN1B/p27Kip1, thus controlling CDKN1B subcellular location and cell cycle progression in G1 phase. May be involved in trafficking and/or processing of RNA. The sequence is that of Serine/threonine-protein kinase Kist (UHMK1) from Pongo abelii (Sumatran orangutan).